The chain runs to 869 residues: Dynamin-3 (869 aa).

Positions Leu-28–Pro-294 constitute a Dynamin-type G domain. The segment at Gly-38–Ser-45 is G1 motif. Gly-38–Ser-46 provides a ligand contact to GTP. The segment at Val-64–Arg-66 is G2 motif. Residues Asp-136 to Gly-139 are G3 motif. A G4 motif region spans residues Thr-205 to Asp-208. A GTP-binding site is contributed by Thr-205–Asp-211. A Phosphotyrosine modification is found at Tyr-231. The G5 motif stretch occupies residues Val-235–Ser-238. Asn-236–Gln-239 contributes to the GTP binding site. An N6-acetyllysine modification is found at Lys-299. Positions Ile-525–Val-631 constitute a PH domain. Tyr-603 carries the post-translational modification Phosphotyrosine. Residue Lys-604 is modified to N6-acetyllysine. The GED domain occupies Val-659–Val-750. Positions Thr-752 to Asp-869 are disordered. Phosphoserine occurs at positions 769 and 773. The span at Thr-775–Ala-796 shows a compositional bias: low complexity. Composition is skewed to pro residues over residues Pro-797–Pro-822 and Pro-832–Thr-855. Ser-853 carries the post-translational modification Phosphoserine.

The protein belongs to the TRAFAC class dynamin-like GTPase superfamily. Dynamin/Fzo/YdjA family. Isoform-specific expression in germ-cell-depleted testis (Sertoli cells), brain (peripheral sensory neurons), lung and heart.

The protein localises to the cytoplasm. It localises to the cytoskeleton. Its subcellular location is the cytoplasmic vesicle. The protein resides in the golgi apparatus. The enzyme catalyses GTP + H2O = GDP + phosphate + H(+). In terms of biological role, microtubule-associated force-producing protein involved in producing microtubule bundles and able to bind and hydrolyze GTP. Most probably involved in vesicular trafficking processes, in particular endocytosis. The sequence is that of Dynamin-3 (Dnm3) from Rattus norvegicus (Rat).